A 35-amino-acid chain; its full sequence is Malate dehydrogenase, mitochondrial (35 aa).

N7 contacts NAD(+). Position 23 (R23) interacts with substrate.

The protein belongs to the LDH/MDH superfamily. MDH type 1 family. In terms of assembly, homodimer.

It localises to the mitochondrion matrix. It carries out the reaction (S)-malate + NAD(+) = oxaloacetate + NADH + H(+). This is Malate dehydrogenase, mitochondrial from Capsicum annuum var. annuum (Red pepper).